The sequence spans 226 residues: 2-C-methyl-D-erythritol 4-phosphate cytidylyltransferase (226 aa).

The protein belongs to the IspD/TarI cytidylyltransferase family. IspD subfamily.

It catalyses the reaction 2-C-methyl-D-erythritol 4-phosphate + CTP + H(+) = 4-CDP-2-C-methyl-D-erythritol + diphosphate. The protein operates within isoprenoid biosynthesis; isopentenyl diphosphate biosynthesis via DXP pathway; isopentenyl diphosphate from 1-deoxy-D-xylulose 5-phosphate: step 2/6. Its function is as follows. Catalyzes the formation of 4-diphosphocytidyl-2-C-methyl-D-erythritol from CTP and 2-C-methyl-D-erythritol 4-phosphate (MEP). This Microcystis aeruginosa (strain NIES-843 / IAM M-2473) protein is 2-C-methyl-D-erythritol 4-phosphate cytidylyltransferase.